The sequence spans 114 residues: Iron-sulfur cluster insertion protein ErpA (114 aa).

Iron-sulfur cluster-binding residues include C42, C106, and C108.

It belongs to the HesB/IscA family. As to quaternary structure, homodimer. Iron-sulfur cluster serves as cofactor.

In terms of biological role, required for insertion of 4Fe-4S clusters for at least IspG. In Serratia proteamaculans (strain 568), this protein is Iron-sulfur cluster insertion protein ErpA.